A 74-amino-acid polypeptide reads, in one-letter code: MKFWILLLTVSAHGIVVFLHVFGSLKEKPEEIEQCWVQPPARFCGRRCTKVQKCVSPNYTCCWTYCGNICLNNE.

The N-terminal stretch at 1-19 is a signal peptide; sequence MKFWILLLTVSAHGIVVFL.

It localises to the secreted. The chain is Protein WFDC9 (Wfdc9) from Rattus norvegicus (Rat).